Reading from the N-terminus, the 155-residue chain is Nucleoside diphosphate kinase, cytosolic (155 aa).

ATP contacts are provided by Lys16, Phe64, Arg92, Thr98, Arg109, and Asn119. The Pros-phosphohistidine intermediate role is filled by His122.

The protein belongs to the NDK family. As to quaternary structure, homohexamer. Mg(2+) serves as cofactor.

Its subcellular location is the cytoplasm. It carries out the reaction a 2'-deoxyribonucleoside 5'-diphosphate + ATP = a 2'-deoxyribonucleoside 5'-triphosphate + ADP. The enzyme catalyses a ribonucleoside 5'-diphosphate + ATP = a ribonucleoside 5'-triphosphate + ADP. Functionally, major role in the synthesis of nucleoside triphosphates other than ATP. The chain is Nucleoside diphosphate kinase, cytosolic (ndkC-1) from Dictyostelium discoideum (Social amoeba).